The primary structure comprises 280 residues: Hydroxyethylthiazole kinase (280 aa).

Position 50 (Met50) interacts with substrate. Residues Lys125 and Thr178 each contribute to the ATP site. Gly205 lines the substrate pocket.

This sequence belongs to the Thz kinase family. Mg(2+) is required as a cofactor.

The catalysed reaction is 5-(2-hydroxyethyl)-4-methylthiazole + ATP = 4-methyl-5-(2-phosphooxyethyl)-thiazole + ADP + H(+). It functions in the pathway cofactor biosynthesis; thiamine diphosphate biosynthesis; 4-methyl-5-(2-phosphoethyl)-thiazole from 5-(2-hydroxyethyl)-4-methylthiazole: step 1/1. Catalyzes the phosphorylation of the hydroxyl group of 4-methyl-5-beta-hydroxyethylthiazole (THZ). The protein is Hydroxyethylthiazole kinase of Lacticaseibacillus paracasei (strain ATCC 334 / BCRC 17002 / CCUG 31169 / CIP 107868 / KCTC 3260 / NRRL B-441) (Lactobacillus paracasei).